We begin with the raw amino-acid sequence, 146 residues long: Late protein OPG112 (146 aa).

A helical transmembrane segment spans residues 10–32 (LAMTAFFGELSTLDIMALIMSIF).

Belongs to the orthopoxvirus OPG112 family.

The protein localises to the host membrane. It localises to the host cytoplasm. Functionally, contributes to the formation of crescents and immature virions (IV). Interacts with phosphatidylinositol-3-phosphate (PI3P) and phosphatidylinositol-4-phosphate (PI4P) lipids in order to form virion membranes. Mechanistically, mediates proper formation of OPG125-hexamers, and hence the honey comb lattice and spherical immature virus. This is Late protein OPG112 (OPG112) from Bos taurus (Bovine).